The chain runs to 632 residues: Nucleoside triphosphatase I (632 aa).

In terms of domain architecture, Helicase ATP-binding spans 42–204 (FLGLDKMHSL…VMLVNLLRPK (163 aa)). 55–62 (HETGVGKT) is a binding site for ATP. The short motif at 141-144 (DECH) is the DEXH box element. The Helicase C-terminal domain maps to 367 to 532 (KFTDVCLRIL…EFTQLFKVFK (166 aa)). Positions 457–524 (DIFILDMTWN…DIIRTKSKEF (68 aa)) are binding to the cap-specific mRNA (nucleoside-2'-O-)-methyltransferase.

This sequence belongs to the helicase family. NPH I subfamily. In terms of assembly, monomer. Interacts (via C-terminus) with RAP94 (via N-terminus). Interacts with the cap-specific mRNA (nucleoside-2'-O-)-methyltransferase.

It is found in the virion. It catalyses the reaction a ribonucleoside 5'-triphosphate + H2O = a ribonucleoside 5'-diphosphate + phosphate + H(+). Its function is as follows. DNA-dependent ATPase required for providing the needed energy to achieve the termination of early transcripts. Acts in concert with the RAP94 subunit of the virion RNA polymerase and the capping enzyme/VTF to catalyze release of UUUUUNU-containing nascent RNA from the elongation complex. NPH-I must bind ssDNA in order to exhibit ATPase activity. This is Nucleoside triphosphatase I (NPH1) from Myxoma virus (strain Lausanne) (MYXV).